The following is a 388-amino-acid chain: Carbamoyl phosphate synthase small chain (388 aa).

Residues 1–194 (MAQNPLSKPT…WPEGYARQEA (194 aa)) are CPSase. Ser53, Gly246, and Gly248 together coordinate L-glutamine. Positions 198–387 (KVVAIDYGAK…AAAMDAQKAE (190 aa)) constitute a Glutamine amidotransferase type-1 domain. Catalysis depends on Cys276, which acts as the Nucleophile. Residues Leu277, Gln280, Asn318, Gly320, and Phe321 each coordinate L-glutamine. Residues His360 and Glu362 contribute to the active site.

The protein belongs to the CarA family. In terms of assembly, composed of two chains; the small (or glutamine) chain promotes the hydrolysis of glutamine to ammonia, which is used by the large (or ammonia) chain to synthesize carbamoyl phosphate. Tetramer of heterodimers (alpha,beta)4.

It carries out the reaction hydrogencarbonate + L-glutamine + 2 ATP + H2O = carbamoyl phosphate + L-glutamate + 2 ADP + phosphate + 2 H(+). The enzyme catalyses L-glutamine + H2O = L-glutamate + NH4(+). The protein operates within amino-acid biosynthesis; L-arginine biosynthesis; carbamoyl phosphate from bicarbonate: step 1/1. It participates in pyrimidine metabolism; UMP biosynthesis via de novo pathway; (S)-dihydroorotate from bicarbonate: step 1/3. In terms of biological role, small subunit of the glutamine-dependent carbamoyl phosphate synthetase (CPSase). CPSase catalyzes the formation of carbamoyl phosphate from the ammonia moiety of glutamine, carbonate, and phosphate donated by ATP, constituting the first step of 2 biosynthetic pathways, one leading to arginine and/or urea and the other to pyrimidine nucleotides. The small subunit (glutamine amidotransferase) binds and cleaves glutamine to supply the large subunit with the substrate ammonia. This Ruegeria pomeroyi (strain ATCC 700808 / DSM 15171 / DSS-3) (Silicibacter pomeroyi) protein is Carbamoyl phosphate synthase small chain.